A 352-amino-acid chain; its full sequence is C-X-C chemokine receptor type 4 (352 aa).

The tract at residues 1 to 21 (MEGISIYTSDNYTEEMGSGDY) is important for chemokine binding and signaling. Residues 1 to 38 (MEGISIYTSDNYTEEMGSGDYDSIKEPCFREENAHFNR) are Extracellular-facing. Sulfotyrosine is present on Tyr-7. An N-linked (GlcNAc...) asparagine glycan is attached at Asn-11. Residue Tyr-12 is modified to Sulfotyrosine. Residue Ser-18 is glycosylated (O-linked (Xyl...) (chondroitin sulfate) serine). Tyr-21 is modified (sulfotyrosine). 2 disulfides stabilise this stretch: Cys-28-Cys-274 and Cys-109-Cys-186. A helical membrane pass occupies residues 39–63 (IFLPTIYSIIFLTGIVGNGLVILVM). Topologically, residues 64-77 (GYQKKLRSMTDKYR) are cytoplasmic. A helical transmembrane segment spans residues 78–99 (LHLSVADLLFVITLPFWAVDAV). The segment at 94–97 (WAVD) is chemokine binding. Topologically, residues 100-110 (ANWYFGNFLCK) are extracellular. The chain crosses the membrane as a helical span at residues 111 to 130 (AVHVIYTVNLYSSVLILAFI). The tract at residues 113 to 117 (HVIYT) is chemokine binding. Residues 131-154 (SLDRYLAIVHATNSQKPRKLLAEK) lie on the Cytoplasmic side of the membrane. An Important for signaling motif is present at residues 133-135 (DRY). The segment at 135–147 (YLAIVHATNSQKP) is involved in dimerization; when bound to chemokine. Residues 155 to 174 (VVYVGVWIPALLLTIPDFIF) form a helical membrane-spanning segment. Residues 175 to 195 (ASVSEADDRYICDRFYPNDLW) are Extracellular-facing. Positions 186–190 (CDRFY) are chemokine binding, important for signaling. Positions 191-210 (PNDLWVVVFQFQHIMVGLIL) are involved in dimerization. A helical membrane pass occupies residues 196-216 (VVVFQFQHIMVGLILPGIVIL). Residues 217–241 (SCYCIIISKLSHSKGHQKGKALKTT) are Cytoplasmic-facing. Residues 242–261 (VILILAFFACWLPYYIGISI) traverse the membrane as a helical segment. Topologically, residues 262–282 (DSFILLEIIKQGCEFENTVHK) are extracellular. An involved in dimerization region spans residues 266-268 (LLE). A helical membrane pass occupies residues 283-302 (WISITEALAFFHCCLNPILY). At 303 to 352 (AFLGAKFKTSAQHALTSVSRGSSLKILSKGKRGGHSSVSTESESSSFHSS) the chain is on the cytoplasmic side. Ser-319 and Ser-321 each carry phosphoserine. 2 positions are modified to phosphoserine; by PKC and GRK6: Ser-324 and Ser-325. The tract at residues 329–352 (LSKGKRGGHSSVSTESESSSFHSS) is disordered. Residue Ser-330 is modified to Phosphoserine; by GRK6. Lys-331 is covalently cross-linked (Glycyl lysine isopeptide (Lys-Gly) (interchain with G-Cter in ubiquitin)). Residues 337 to 352 (HSSVSTESESSSFHSS) show a composition bias toward low complexity. At Ser-339 the chain carries Phosphoserine; by GRK6. A phosphoserine mark is found at Ser-348 and Ser-351.

Belongs to the G-protein coupled receptor 1 family. In terms of assembly, monomer. Can form homodimers. Interacts with CD164. Interacts with ARRB2; the interaction is dependent on the C-terminal phosphorylation of CXCR4 and allows activation of MAPK1 and MAPK3. Interacts with ARR3; the interaction is dependent on the C-terminal phosphorylation of CXCR4 and modulates calcium mobilization. Interacts with RNF113A; the interaction, enhanced by CXCL12, promotes CXCR4 ubiquitination and subsequent degradation. Interacts (via the cytoplasmic C-terminal) with ITCH (via the WW domains I and II); the interaction, enhanced by CXCL12, promotes CXCR4 ubiquitination and leads to its degradation. Interacts with extracellular ubiquitin. Interacts with DBN1; this interaction is enhanced by antigenic stimulation. Following LPS binding, may form a complex with GDF5, HSP90AA1 and HSPA8. In terms of processing, phosphorylated on agonist stimulation. Rapidly phosphorylated on serine and threonine residues in the C-terminal. Phosphorylation at Ser-324 and Ser-325 leads to recruitment of ITCH, ubiquitination and protein degradation. Ubiquitinated after ligand binding, leading to its degradation. Ubiquitinated by ITCH at the cell membrane on agonist stimulation. The ubiquitin-dependent mechanism, endosomal sorting complex required for transport (ESCRT), then targets CXCR4 for lysosomal degradation. This process is dependent also on prior Ser-/Thr-phosphorylation in the C-terminal of CXCR4. Also binding of ARRB1 to STAM negatively regulates CXCR4 sorting to lysosomes though modulating ubiquitination of SFR5S. Post-translationally, sulfation is required for efficient binding of CXCL12/SDF-1alpha and promotes its dimerization. In terms of processing, O- and N-glycosylated. N-glycosylation can mask coreceptor function. The O-glycosylation chondroitin sulfate attachment does not affect interaction with CXCL12/SDF-1alpha nor its coreceptor activity.

The protein localises to the cell membrane. Its subcellular location is the cell junction. It localises to the early endosome. It is found in the late endosome. The protein resides in the lysosome. Receptor for the C-X-C chemokine CXCL12/SDF-1 that transduces a signal by increasing intracellular calcium ion levels and enhancing MAPK1/MAPK3 activation. Involved in the AKT signaling cascade. Plays a role in regulation of cell migration, e.g. during wound healing. Acts as a receptor for extracellular ubiquitin; leading to enhanced intracellular calcium ions and reduced cellular cAMP levels. Binds bacterial lipopolysaccharide (LPS) et mediates LPS-induced inflammatory response, including TNF secretion by monocytes. Involved in hematopoiesis and in cardiac ventricular septum formation. Also plays an essential role in vascularization of the gastrointestinal tract, probably by regulating vascular branching and/or remodeling processes in endothelial cells. Involved in cerebellar development. In the CNS, could mediate hippocampal-neuron survival. The polypeptide is C-X-C chemokine receptor type 4 (CXCR4) (Chlorocebus aethiops (Green monkey)).